The following is a 316-amino-acid chain: Glutathione synthetase (316 aa).

The region spanning 124 to 311 (NEKLAALLFP…IAGLLFDAIE (188 aa)) is the ATP-grasp domain. 151 to 208 (FVLEHGQAVLKPLDGMGGRSIFRSGSGDPNLNVILETLTDGNRKLTLAQRFIPDITAG) contacts ATP. 2 residues coordinate Mg(2+): Glu-282 and Asn-284.

Belongs to the prokaryotic GSH synthase family. Mg(2+) is required as a cofactor. Mn(2+) serves as cofactor.

It carries out the reaction gamma-L-glutamyl-L-cysteine + glycine + ATP = glutathione + ADP + phosphate + H(+). Its pathway is sulfur metabolism; glutathione biosynthesis; glutathione from L-cysteine and L-glutamate: step 2/2. The protein is Glutathione synthetase of Xanthomonas axonopodis pv. citri (strain 306).